The sequence spans 89 residues: NADH-ubiquinone oxidoreductase chain 4L (89 aa).

The next 3 helical transmembrane spans lie at 1 to 21, 22 to 42, and 57 to 77; these read MSLT…NRKN, IILM…LILV, and IYII…LVAF.

Belongs to the complex I subunit 4L family.

Its subcellular location is the mitochondrion membrane. The catalysed reaction is a ubiquinone + NADH + 5 H(+)(in) = a ubiquinol + NAD(+) + 4 H(+)(out). In terms of biological role, core subunit of the mitochondrial membrane respiratory chain NADH dehydrogenase (Complex I) that is believed to belong to the minimal assembly required for catalysis. Complex I functions in the transfer of electrons from NADH to the respiratory chain. The immediate electron acceptor for the enzyme is believed to be ubiquinone. This chain is NADH-ubiquinone oxidoreductase chain 4L (ND4L), found in Hypocrea jecorina (Trichoderma reesei).